A 280-amino-acid polypeptide reads, in one-letter code: GTP-binding protein rhoC (280 aa).

Residues 13–59 form a disordered region; it reads TSRRHSLVTPPPSVAPRQNRMRSQSVRVSNGTVSTDNSMSSGRVSEA. Residues 33-59 are compositionally biased toward polar residues; the sequence is MRSQSVRVSNGTVSTDNSMSSGRVSEA. 76–83 is a GTP binding site; it reads GDGGCGKT. An Effector region motif is present at residues 98–106; it reads YVPTVFENY. GTP contacts are provided by residues 125-129 and 183-186; these read DTAGQ and LKSD. The interval 251 to 275 is disordered; that stretch reads WDTRLPSSSGKPGGKPIGGKKIKKR. A Cysteine methyl ester modification is found at Cys277. Cys277 carries S-geranylgeranyl cysteine lipidation. A propeptide spans 278 to 280 (removed in mature form); sequence KIL.

Belongs to the small GTPase superfamily. Rho family.

The protein localises to the cell membrane. This chain is GTP-binding protein rhoC (rhoC), found in Emericella nidulans (strain FGSC A4 / ATCC 38163 / CBS 112.46 / NRRL 194 / M139) (Aspergillus nidulans).